A 316-amino-acid polypeptide reads, in one-letter code: Porphobilinogen deaminase (316 aa).

Residue Cys-242 is modified to S-(dipyrrolylmethanemethyl)cysteine.

Belongs to the HMBS family. As to quaternary structure, monomer. Dipyrromethane serves as cofactor.

It catalyses the reaction 4 porphobilinogen + H2O = hydroxymethylbilane + 4 NH4(+). The protein operates within porphyrin-containing compound metabolism; protoporphyrin-IX biosynthesis; coproporphyrinogen-III from 5-aminolevulinate: step 2/4. Functionally, tetrapolymerization of the monopyrrole PBG into the hydroxymethylbilane pre-uroporphyrinogen in several discrete steps. The polypeptide is Porphobilinogen deaminase (Thioalkalivibrio sulfidiphilus (strain HL-EbGR7)).